The sequence spans 206 residues: Large ribosomal subunit protein uL4 (206 aa).

The disordered stretch occupies residues 63 to 96; it reads MYKQKGTGRARHHSARAPQFRGGGKAHGPVVRSH. A compositionally biased stretch (basic residues) spans 64–77; it reads YKQKGTGRARHHSA.

Belongs to the universal ribosomal protein uL4 family. Part of the 50S ribosomal subunit.

Functionally, one of the primary rRNA binding proteins, this protein initially binds near the 5'-end of the 23S rRNA. It is important during the early stages of 50S assembly. It makes multiple contacts with different domains of the 23S rRNA in the assembled 50S subunit and ribosome. In terms of biological role, forms part of the polypeptide exit tunnel. The protein is Large ribosomal subunit protein uL4 of Allorhizobium ampelinum (strain ATCC BAA-846 / DSM 112012 / S4) (Agrobacterium vitis (strain S4)).